The sequence spans 529 residues: Peptide chain release factor 3 (529 aa).

A tr-type G domain is found at Ala-11–Met-280. Residues Ser-20–Thr-27, Asp-88–His-92, and Asn-142–Asp-145 contribute to the GTP site.

It belongs to the TRAFAC class translation factor GTPase superfamily. Classic translation factor GTPase family. PrfC subfamily.

The protein localises to the cytoplasm. Its function is as follows. Increases the formation of ribosomal termination complexes and stimulates activities of RF-1 and RF-2. It binds guanine nucleotides and has strong preference for UGA stop codons. It may interact directly with the ribosome. The stimulation of RF-1 and RF-2 is significantly reduced by GTP and GDP, but not by GMP. The sequence is that of Peptide chain release factor 3 from Citrobacter koseri (strain ATCC BAA-895 / CDC 4225-83 / SGSC4696).